We begin with the raw amino-acid sequence, 327 residues long: Geranylgeranyl transferase type-2 subunit alpha (327 aa).

5 PFTA repeats span residues 44-78 (YSIEALKKTSELLEKNPEFNAIWNYRRDIIASLAS), 84-118 (FWDKELVFVMMLLKDYPKVYWIWNHRLWVLKHYPT), 123-157 (VWQTELAVVNKLLEQDARNYHGWHYRRIVVGNIES), 163-197 (LDKEEFEYTTIKINNNISNYSAWHQRVQIISRMFQ), and 207-241 (YIRTEISYIINAMFTDAEDQSVWFYIKWFIKNDIV).

It belongs to the protein prenyltransferase subunit alpha family. In terms of assembly, heterodimer of an alpha and a beta subunit.

The catalysed reaction is geranylgeranyl diphosphate + L-cysteinyl-[protein] = S-geranylgeranyl-L-cysteinyl-[protein] + diphosphate. Functionally, catalyzes the transfer of a geranyl-geranyl moiety from geranyl-geranyl pyrophosphate to proteins having the C-terminal -XCC or -XCXC, where both cysteines may become modified. Acts on YPT1 and SEC4. In Saccharomyces cerevisiae (strain ATCC 204508 / S288c) (Baker's yeast), this protein is Geranylgeranyl transferase type-2 subunit alpha (BET4).